Here is a 152-residue protein sequence, read N- to C-terminus: 3-hydroxyacyl-[acyl-carrier-protein] dehydratase FabZ (152 aa).

His-58 is an active-site residue.

Belongs to the thioester dehydratase family. FabZ subfamily.

It is found in the cytoplasm. The catalysed reaction is a (3R)-hydroxyacyl-[ACP] = a (2E)-enoyl-[ACP] + H2O. Its function is as follows. Involved in unsaturated fatty acids biosynthesis. Catalyzes the dehydration of short chain beta-hydroxyacyl-ACPs and long chain saturated and unsaturated beta-hydroxyacyl-ACPs. The chain is 3-hydroxyacyl-[acyl-carrier-protein] dehydratase FabZ from Prochlorococcus marinus subsp. pastoris (strain CCMP1986 / NIES-2087 / MED4).